The following is a 293-amino-acid chain: 1D-myo-inositol 2-acetamido-2-deoxy-alpha-D-glucopyranoside deacetylase 2 (293 aa).

Residues His6, Asp9, and His142 each contribute to the Zn(2+) site.

The protein belongs to the MshB deacetylase family. Requires Zn(2+) as cofactor.

The enzyme catalyses 1D-myo-inositol 2-acetamido-2-deoxy-alpha-D-glucopyranoside + H2O = 1D-myo-inositol 2-amino-2-deoxy-alpha-D-glucopyranoside + acetate. Functionally, catalyzes the deacetylation of 1D-myo-inositol 2-acetamido-2-deoxy-alpha-D-glucopyranoside (GlcNAc-Ins) in the mycothiol biosynthesis pathway. This is 1D-myo-inositol 2-acetamido-2-deoxy-alpha-D-glucopyranoside deacetylase 2 from Frankia alni (strain DSM 45986 / CECT 9034 / ACN14a).